The sequence spans 449 residues: Exodeoxyribonuclease 7 large subunit (449 aa).

The protein belongs to the XseA family. Heterooligomer composed of large and small subunits.

It localises to the cytoplasm. It carries out the reaction Exonucleolytic cleavage in either 5'- to 3'- or 3'- to 5'-direction to yield nucleoside 5'-phosphates.. Functionally, bidirectionally degrades single-stranded DNA into large acid-insoluble oligonucleotides, which are then degraded further into small acid-soluble oligonucleotides. This is Exodeoxyribonuclease 7 large subunit from Salmonella paratyphi A (strain ATCC 9150 / SARB42).